The sequence spans 459 residues: tRNA modification GTPase MnmE (459 aa).

(6S)-5-formyl-5,6,7,8-tetrahydrofolate is bound by residues Arg30, Glu93, and Lys132. Residues 226–381 (GVTMAIVGKP…LEEKILESVK (156 aa)) enclose the TrmE-type G domain. Residue Asn236 coordinates K(+). Residues 236-241 (NVGKST), 255-261 (TDIPGTT), and 280-283 (DTAG) each bind GTP. Ser240 serves as a coordination point for Mg(2+). Residues Thr255, Ile257, and Thr260 each contribute to the K(+) site. A Mg(2+)-binding site is contributed by Thr261. (6S)-5-formyl-5,6,7,8-tetrahydrofolate is bound at residue Lys459.

This sequence belongs to the TRAFAC class TrmE-Era-EngA-EngB-Septin-like GTPase superfamily. TrmE GTPase family. As to quaternary structure, homodimer. Heterotetramer of two MnmE and two MnmG subunits. Requires K(+) as cofactor.

The protein resides in the cytoplasm. In terms of biological role, exhibits a very high intrinsic GTPase hydrolysis rate. Involved in the addition of a carboxymethylaminomethyl (cmnm) group at the wobble position (U34) of certain tRNAs, forming tRNA-cmnm(5)s(2)U34. This is tRNA modification GTPase MnmE from Fervidobacterium nodosum (strain ATCC 35602 / DSM 5306 / Rt17-B1).